A 173-amino-acid polypeptide reads, in one-letter code: NADH-ubiquinone oxidoreductase chain 6 (173 aa).

Transmembrane regions (helical) follow at residues 1-21, 27-47, 48-68, 87-107, and 139-159; these read MTYF…AVAS, YGVV…LSLG, VSFV…VVFV, VVGY…VGGF, and CGVG…FVVL.

The protein belongs to the complex I subunit 6 family.

It localises to the mitochondrion membrane. It catalyses the reaction a ubiquinone + NADH + 5 H(+)(in) = a ubiquinol + NAD(+) + 4 H(+)(out). Core subunit of the mitochondrial membrane respiratory chain NADH dehydrogenase (Complex I) that is believed to belong to the minimal assembly required for catalysis. Complex I functions in the transfer of electrons from NADH to the respiratory chain. The immediate electron acceptor for the enzyme is believed to be ubiquinone. This is NADH-ubiquinone oxidoreductase chain 6 (MT-ND6) from Aethia pusilla (Least auklet).